The sequence spans 485 residues: Retron Mx162 reverse transcriptase (485 aa).

The disordered stretch occupies residues Met1–Arg33. Residues Arg167–Val407 enclose the Reverse transcriptase domain. Mg(2+) is bound by residues Asp250, Asp346, and Asp347.

This sequence belongs to the bacterial reverse transcriptase family.

It carries out the reaction DNA(n) + a 2'-deoxyribonucleoside 5'-triphosphate = DNA(n+1) + diphosphate. MsDNA synthesis is inhibited by rifampicin and chloramphenicol. In terms of biological role, reverse transcriptase (RT) responsible for synthesis of msDNA-Mx162 (a branched molecule with RNA linked by a 2',5'-phosphodiester bond to ssDNA). The retron transcript serves as primer (from a conserved internal G residue) and template for the reaction, and codes for the RT. The retron is involved in antiviral defense. The protein is Retron Mx162 reverse transcriptase of Myxococcus xanthus.